The chain runs to 559 residues: Protein QNR-71 (559 aa).

A signal peptide spans 1-22 (MSQAHRHLALLLPAEAVLCAAA). At 23-487 (MRFQDVLSNG…NGGSSSGTTK (465 aa)) the chain is on the extracellular side. 10 N-linked (GlcNAc...) asparagine glycosylation sites follow: Asn92, Asn133, Asn145, Asn149, Asn192, Asn199, Asn248, Asn274, Asn307, and Asn311. Residues 239-326 (VSMSQKHDRN…IIPVPCKPVT (88 aa)) form the PKD domain. The disordered stretch occupies residues 329-356 (PSLPTPAVTTDASSNSDPSAPNEMAEDN). Residues 335-347 (AVTTDASSNSDPS) are compositionally biased toward polar residues. Asn459 is a glycosylation site (N-linked (GlcNAc...) asparagine). Residues 488–508 (GVFIFLGLLAVFGAIGAFVLY) form a helical membrane-spanning segment. Over 509-559 (KRYKQYKPIERSAGQAENQEGLSAYVSNFKAFFFPKSTERNPLLKSKPGIV) the chain is Cytoplasmic.

The protein belongs to the PMEL/NMB family. In terms of tissue distribution, melanocyte-specific, restricted to the pigmented layer of the retina and the epidermis.

It is found in the membrane. Its function is as follows. Could be involved in melanogenesis. This Coturnix japonica (Japanese quail) protein is Protein QNR-71 (QNR-71).